We begin with the raw amino-acid sequence, 381 residues long: Cobalt-precorrin-5B C(1)-methyltransferase (381 aa).

This sequence belongs to the CbiD family.

It carries out the reaction Co-precorrin-5B + S-adenosyl-L-methionine = Co-precorrin-6A + S-adenosyl-L-homocysteine. Its pathway is cofactor biosynthesis; adenosylcobalamin biosynthesis; cob(II)yrinate a,c-diamide from sirohydrochlorin (anaerobic route): step 6/10. Functionally, catalyzes the methylation of C-1 in cobalt-precorrin-5B to form cobalt-precorrin-6A. This is Cobalt-precorrin-5B C(1)-methyltransferase from Prochlorococcus marinus (strain NATL1A).